Consider the following 510-residue polypeptide: Monocarboxylate transporter 14 (510 aa).

The Cytoplasmic portion of the chain corresponds to 1–27 (MYTSHEDIGYDFEDGPKDKKTLKPHPN). 6 helical membrane-spanning segments follow: residues 28–48 (IDGG…ILIM), 74–94 (WVSS…GLFI), 103–123 (AIIG…AANV), 127–147 (FITF…PAVV), 159–179 (LAQG…TVLL), and 191–209 (AMLI…GALM). The segment at 214–255 (PGKNPNDPGEKDVRGLPAHSTESVKSTGQQGRTEEKDGGLGN) is disordered. Polar residues predominate over residues 233-244 (STESVKSTGQQG). 6 consecutive transmembrane segments (helical) span residues 315–335 (MFVA…IPFI), 353–373 (FPLT…LGVI), 379–399 (ISVW…IFIL), 408–428 (LAVI…MPVV), 443–463 (GIII…AGWI), and 474–494 (FYIC…QPCI). At 495 to 510 (RIIEQSRRKYMDGAHV) the chain is on the cytoplasmic side.

This sequence belongs to the major facilitator superfamily. Monocarboxylate porter (TC 2.A.1.13) family.

The protein resides in the cell membrane. Functionally, proton-linked monocarboxylate transporter. May catalyze the transport of monocarboxylates across the plasma membrane. This chain is Monocarboxylate transporter 14 (SLC16A14), found in Homo sapiens (Human).